The primary structure comprises 583 residues: Thiol:disulfide interchange protein DsbD (583 aa).

An N-terminal signal peptide occupies residues 1–18 (MRRLFLLLFMLFTTLAHA). Disulfide bonds link C118-C124 and C186-C306. Helical transmembrane passes span 168–188 (GLGL…PCSL), 214–234 (SYVL…ALLG), 245–265 (WVLG…FGFF), 289–309 (LIGC…CMTA), 326–346 (FGGL…LLLV), 359–379 (WMNL…IYML), 382–402 (VLNP…VAYC), and 413–433 (LLHL…MLLV). Residues 458-581 (VTAHDAFTTV…FLQRWTQTRE (124 aa)) form the Thioredoxin domain. C496 and C499 are joined by a disulfide.

This sequence belongs to the thioredoxin family. DsbD subfamily.

It localises to the cell inner membrane. The enzyme catalyses [protein]-dithiol + NAD(+) = [protein]-disulfide + NADH + H(+). The catalysed reaction is [protein]-dithiol + NADP(+) = [protein]-disulfide + NADPH + H(+). Functionally, required to facilitate the formation of correct disulfide bonds in some periplasmic proteins and for the assembly of the periplasmic c-type cytochromes. Acts by transferring electrons from cytoplasmic thioredoxin to the periplasm. This transfer involves a cascade of disulfide bond formation and reduction steps. This chain is Thiol:disulfide interchange protein DsbD, found in Pseudomonas fluorescens (strain ATCC BAA-477 / NRRL B-23932 / Pf-5).